The following is a 591-amino-acid chain: CTP synthase 1 (591 aa).

The 255-residue stretch at 300–554 (SIALVGKYTK…LAAAGRLQSY (255 aa)) folds into the Glutamine amidotransferase type-1 domain. Active-site for GATase activity residues include cysteine 399, histidine 526, and glutamate 528. Phosphoserine occurs at positions 571 and 575.

This sequence belongs to the CTP synthase family.

It catalyses the reaction UTP + L-glutamine + ATP + H2O = CTP + L-glutamate + ADP + phosphate + 2 H(+). It functions in the pathway pyrimidine metabolism; CTP biosynthesis via de novo pathway; CTP from UDP: step 2/2. This enzyme is involved in the de novo synthesis of CTP, a precursor of DNA, RNA and phospholipids. Catalyzes the ATP-dependent amination of UTP to CTP with either L-glutamine or ammonia as a source of nitrogen. The polypeptide is CTP synthase 1 (ctps1) (Danio rerio (Zebrafish)).